A 145-amino-acid polypeptide reads, in one-letter code: Ribonuclease H (145 aa).

The RNase H type-1 domain occupies 1-141 (MQEVTIYSDG…ADALANRGVA (141 aa)). The Mg(2+) site is built by D9, E47, D69, and D133.

Belongs to the RNase H family. Monomer. Mg(2+) is required as a cofactor.

The protein localises to the cytoplasm. It catalyses the reaction Endonucleolytic cleavage to 5'-phosphomonoester.. Functionally, endonuclease that specifically degrades the RNA of RNA-DNA hybrids. This Cupriavidus metallidurans (strain ATCC 43123 / DSM 2839 / NBRC 102507 / CH34) (Ralstonia metallidurans) protein is Ribonuclease H.